Reading from the N-terminus, the 243-residue chain is MVSLREQWNEQARERQREISARKTEIEEARSSIQKELQAQYEARLAATQQLQSELRQFYNNLANDTAGFLERTRTTREQMAQKLEQELTQLITDLENNTAALLQEANQERVRVSQQQKALAIELKNQLAQFHEQLETSVGNWRQETQEQQQQTAAQLREDLNAFSANLMAQVEKLLINLEETRTANAQQQREALFNFRRQLTVDVWGETESDSLKVEENTPSDVWGETESDFLEVEENTPFVT.

Belongs to the gas vesicle GvpC family.

The protein localises to the gas vesicle shell. Functionally, may confer stability to the gas vesicle shells. Gas vesicles are small, hollow, gas filled protein structures that are found in several microbial planktonic microorganisms. They allow the positioning of the organism at the favorable depth for growth. The chain is 35 kDa gas vesicle protein from Dactylococcopsis salina (strain PCC 8305) (Myxobactron salinum).